A 460-amino-acid chain; its full sequence is Cysteine--tRNA ligase (460 aa).

Cysteine 28 contacts Zn(2+). A 'HIGH' region motif is present at residues 30–40 (MTVYDYCHLGH). Residues cysteine 209, histidine 234, and glutamate 238 each contribute to the Zn(2+) site. Positions 266–270 (KMSKS) match the 'KMSKS' region motif. Lysine 269 is a binding site for ATP.

This sequence belongs to the class-I aminoacyl-tRNA synthetase family. As to quaternary structure, monomer. Zn(2+) serves as cofactor.

Its subcellular location is the cytoplasm. It catalyses the reaction tRNA(Cys) + L-cysteine + ATP = L-cysteinyl-tRNA(Cys) + AMP + diphosphate. This chain is Cysteine--tRNA ligase, found in Pseudomonas savastanoi pv. phaseolicola (strain 1448A / Race 6) (Pseudomonas syringae pv. phaseolicola (strain 1448A / Race 6)).